Consider the following 1143-residue polypeptide: cGMP-specific 3',5'-cyclic phosphodiesterase (1143 aa).

Low complexity-rich tracts occupy residues 1–19 (MHGP…DVSS) and 31–45 (TTSS…ASSS). A disordered region spans residues 1–167 (MHGPVSRSSS…KASTTASQQD (167 aa)). Residues 46-59 (KPLTNGANKTTIST) are compositionally biased toward polar residues. The span at 75 to 84 (GAIPASSSSG) shows a compositional bias: low complexity. Residues 96 to 107 (SNNNRPAATNRS) show a composition bias toward polar residues. Residues 131–153 (SSSSPSQSPSQTQASIQTQTSQQ) are compositionally biased toward low complexity. GAF domains lie at 272–424 (DIDV…GIGI) and 456–637 (NLEC…GLGI). The PDEase domain maps to 667-990 (SQDQTEKLTQ…RNWQDLAEKV (324 aa)). His-743 (proton donor) is an active-site residue. A divalent metal cation-binding residues include His-747, His-783, Asp-784, and Asp-894. Disordered regions lie at residues 1031–1060 (QQSQ…TGAL) and 1090–1143 (SHVS…CALL). Basic and acidic residues-rich tracts occupy residues 1036-1047 (GSEDSHTPEHQR) and 1090-1100 (SHVSEDMDDKS). Low complexity predominate over residues 1109–1127 (ASGSMGRMSASSSTSSTGG). Over residues 1133-1143 (SKKRSKLCALL) the composition is skewed to basic residues. Cys-1140 bears the Cysteine methyl ester mark. Cys-1140 carries S-farnesyl cysteine lipidation. Residues 1141–1143 (ALL) constitute a propeptide, removed in mature form.

The protein belongs to the cyclic nucleotide phosphodiesterase family. As to quaternary structure, interacts with PrBP. It depends on a divalent metal cation as a cofactor.

The protein resides in the cell membrane. It carries out the reaction 3',5'-cyclic GMP + H2O = GMP + H(+). Has a role regulating cGMP transport in Malpighian tubule principal cells. This chain is cGMP-specific 3',5'-cyclic phosphodiesterase, found in Drosophila simulans (Fruit fly).